Consider the following 143-residue polypeptide: Large ribosomal subunit protein uL11 (143 aa).

The protein belongs to the universal ribosomal protein uL11 family. In terms of assembly, part of the ribosomal stalk of the 50S ribosomal subunit. Interacts with L10 and the large rRNA to form the base of the stalk. L10 forms an elongated spine to which L12 dimers bind in a sequential fashion forming a multimeric L10(L12)X complex. One or more lysine residues are methylated.

Its function is as follows. Forms part of the ribosomal stalk which helps the ribosome interact with GTP-bound translation factors. The protein is Large ribosomal subunit protein uL11 of Bordetella parapertussis (strain 12822 / ATCC BAA-587 / NCTC 13253).